Consider the following 555-residue polypeptide: 2-isopropylmalate synthase (555 aa).

In terms of domain architecture, Pyruvate carboxyltransferase spans 30-303 (PIWCSVDLRD…DPGLDCTDIN (274 aa)). Residues D39, H242, H244, and N278 each coordinate Mg(2+). Residues 437-555 (QPDARIKFVD…VSAANRVIAK (119 aa)) are regulatory domain.

Belongs to the alpha-IPM synthase/homocitrate synthase family. LeuA type 2 subfamily. In terms of assembly, homodimer. The cofactor is Mg(2+).

It localises to the cytoplasm. It carries out the reaction 3-methyl-2-oxobutanoate + acetyl-CoA + H2O = (2S)-2-isopropylmalate + CoA + H(+). Its pathway is amino-acid biosynthesis; L-leucine biosynthesis; L-leucine from 3-methyl-2-oxobutanoate: step 1/4. Its function is as follows. Catalyzes the condensation of the acetyl group of acetyl-CoA with 3-methyl-2-oxobutanoate (2-ketoisovalerate) to form 3-carboxy-3-hydroxy-4-methylpentanoate (2-isopropylmalate). The sequence is that of 2-isopropylmalate synthase from Brucella suis biovar 1 (strain 1330).